The following is a 113-amino-acid chain: Neocarzinostatin (113 aa).

2 disulfide bridges follow: cysteine 37-cysteine 47 and cysteine 88-cysteine 93.

Belongs to the neocarzinostatin family.

Its function is as follows. NCS has antibiotic activity (for Gram-positive bacteria) and antitumor activity (for certain mouse tumors). NCS binds non-covalently to a chromophore which is the cytotoxic and mutagenic component of the antibiotic. The chromophore binds to DNA as a weak intercalator and causes single- and double-strand breaks. This Streptomyces malayensis protein is Neocarzinostatin (ncsA).